A 329-amino-acid polypeptide reads, in one-letter code: MQTLAQNLTSQGVNASLTQLIHTLANTSKEISHAVRHGALAGVLGATEQENVQGETQKKLDVITNDMLKDALKGDDTVRGLASEEEDYIVEVGDKGEYLVCFDPLDGSSNIDINSLVGTIFSVLPAPTGELSESSFLQAGRQQVAAGYVLYGPSTMLALTTGQGVQLFTLNPETNEYLLTTEAMSISKDTGEFAINMSNQRFWEAPMQTYISDLLLGTIGPREKAFNMRWIAAMVGDVHRVLSRGGIFTYPTDNKNPQKPYKLRLMYEANPMSFLVEQAGGKASTGYETIMDIQPSEIHQRVAVILGSANEVDACLNYHGLDYSEEPQL.

Mg(2+) contacts are provided by Glu-84, Asp-103, Leu-105, and Asp-106. Substrate is bound by residues 106–109 (DGSS), Asn-196, and Lys-262. Glu-268 provides a ligand contact to Mg(2+).

It belongs to the FBPase class 1 family. In terms of assembly, homotetramer. Requires Mg(2+) as cofactor.

The protein resides in the cytoplasm. The enzyme catalyses beta-D-fructose 1,6-bisphosphate + H2O = beta-D-fructose 6-phosphate + phosphate. The protein operates within carbohydrate biosynthesis; gluconeogenesis. The protein is Fructose-1,6-bisphosphatase class 1 of Shewanella sediminis (strain HAW-EB3).